The primary structure comprises 156 residues: 6,7-dimethyl-8-ribityllumazine synthase (156 aa).

Residues phenylalanine 22, 57 to 59 (AYE), and 81 to 83 (TVI) each bind 5-amino-6-(D-ribitylamino)uracil. 86-87 (GT) provides a ligand contact to (2S)-2-hydroxy-3-oxobutyl phosphate. Histidine 89 acts as the Proton donor in catalysis. Phenylalanine 114 lines the 5-amino-6-(D-ribitylamino)uracil pocket. Arginine 128 contacts (2S)-2-hydroxy-3-oxobutyl phosphate.

It belongs to the DMRL synthase family. Forms an icosahedral capsid composed of 60 subunits, arranged as a dodecamer of pentamers.

It carries out the reaction (2S)-2-hydroxy-3-oxobutyl phosphate + 5-amino-6-(D-ribitylamino)uracil = 6,7-dimethyl-8-(1-D-ribityl)lumazine + phosphate + 2 H2O + H(+). It participates in cofactor biosynthesis; riboflavin biosynthesis; riboflavin from 2-hydroxy-3-oxobutyl phosphate and 5-amino-6-(D-ribitylamino)uracil: step 1/2. Its function is as follows. Catalyzes the formation of 6,7-dimethyl-8-ribityllumazine by condensation of 5-amino-6-(D-ribitylamino)uracil with 3,4-dihydroxy-2-butanone 4-phosphate. This is the penultimate step in the biosynthesis of riboflavin. The sequence is that of 6,7-dimethyl-8-ribityllumazine synthase from Yersinia pseudotuberculosis serotype O:1b (strain IP 31758).